The sequence spans 643 residues: 1-deoxy-D-xylulose-5-phosphate synthase (643 aa).

Thiamine diphosphate contacts are provided by residues H72 and 113 to 115 (GHA). Mg(2+) is bound at residue D144. Residues 145 to 146 (GA), N174, Y287, and E370 each bind thiamine diphosphate. N174 is a Mg(2+) binding site.

The protein belongs to the transketolase family. DXPS subfamily. As to quaternary structure, homodimer. The cofactor is Mg(2+). Thiamine diphosphate serves as cofactor.

It catalyses the reaction D-glyceraldehyde 3-phosphate + pyruvate + H(+) = 1-deoxy-D-xylulose 5-phosphate + CO2. Its pathway is metabolic intermediate biosynthesis; 1-deoxy-D-xylulose 5-phosphate biosynthesis; 1-deoxy-D-xylulose 5-phosphate from D-glyceraldehyde 3-phosphate and pyruvate: step 1/1. Catalyzes the acyloin condensation reaction between C atoms 2 and 3 of pyruvate and glyceraldehyde 3-phosphate to yield 1-deoxy-D-xylulose-5-phosphate (DXP). The sequence is that of 1-deoxy-D-xylulose-5-phosphate synthase from Prochlorococcus marinus (strain MIT 9211).